Reading from the N-terminus, the 328-residue chain is Apoptosis facilitator Bcl-2-like protein 14 (328 aa).

Ser-44 is modified (phosphoserine). The short motif at Ile-213–Glu-227 is the BH3 element. A BH2 motif is present at residues Trp-309 to Trp-316.

This sequence belongs to the Bcl-2 family. In terms of processing, phosphorylated by MELK, leading to inhibit its pro-apoptotic function.

The protein localises to the cytoplasm. In terms of biological role, plays a role in apoptosis. The polypeptide is Apoptosis facilitator Bcl-2-like protein 14 (Bcl2l14) (Mus musculus (Mouse)).